The primary structure comprises 364 residues: Probable UDP-arabinopyranose mutase 1 (364 aa).

The DXD motif motif lies at 103–105; sequence DDD. Arginine 151 carries N-linked (Glc...) arginine glycosylation.

The protein belongs to the RGP family. As to quaternary structure, homopentamer or homohexamer. Requires Mn(2+) as cofactor. The cofactor is Mg(2+). In terms of processing, reversibly glycosylated by UDP-glucose, UDP-xylose and UDP-galactose, but not UDP-mannose.

The protein resides in the secreted. The protein localises to the cell wall. Its subcellular location is the cell junction. It localises to the plasmodesma. It is found in the golgi apparatus. It catalyses the reaction UDP-beta-L-arabinofuranose = UDP-beta-L-arabinopyranose. Its activity is regulated as follows. Inhibited by inhibitor protein (IP) which may be a form of sucrose synthase. Probable UDP-L-arabinose mutase involved in the biosynthesis of cell wall non-cellulosic polysaccharides. Was initially shown to possess an autoglycosylating activity which is dependent on the presence of UDP-glucose and manganese. This Pisum sativum (Garden pea) protein is Probable UDP-arabinopyranose mutase 1.